The chain runs to 812 residues: Zn(2)-C6 fungal-type transcription factor pigI (812 aa).

A disordered region spans residues glycine 42–glutamine 74. Residues cysteine 77–cysteine 105 constitute a DNA-binding region (zn(2)-C6 fungal-type).

The protein resides in the nucleus. Its function is as follows. Zn(2)-C6 fungal-type transcription factor; part of the gene cluster that mediates the biosynthesis of azaphilone pigments (MonAzPs), a complex mixture of compounds with a common azaphilone skeleton very widely used as food colorants. Acts probably as a negative regulator of the azaphilone pigments (MonAzPs) gene cluster. The polypeptide is Zn(2)-C6 fungal-type transcription factor pigI (Monascus ruber (Mold)).